The sequence spans 337 residues: Ribosomal RNA small subunit methyltransferase C (337 aa).

It belongs to the methyltransferase superfamily. RsmC family. As to quaternary structure, monomer.

The protein resides in the cytoplasm. It carries out the reaction guanosine(1207) in 16S rRNA + S-adenosyl-L-methionine = N(2)-methylguanosine(1207) in 16S rRNA + S-adenosyl-L-homocysteine + H(+). In terms of biological role, specifically methylates the guanine in position 1207 of 16S rRNA in the 30S particle. This is Ribosomal RNA small subunit methyltransferase C from Proteus mirabilis (strain HI4320).